Reading from the N-terminus, the 416-residue chain is cAMP-dependent protein kinase regulatory subunit (416 aa).

Residues 2–183 (VSSLPKESQA…RLEKSIRNNF (182 aa)) are dimerization and phosphorylation. 11 positions are modified to phosphoserine: S3, S4, S9, S68, S70, S74, S77, S79, S81, S83, and S84. The segment at 8–45 (ESQAELQLFQNEINAANPSDFLQFSANYFNKRLEQQRA) is dimerization/docking domain (D/D). Positions 65–138 (PEESFSRPQS…TSTPPLPMHF (74 aa)) are disordered. The span at 70–84 (SRPQSAQSQSRSRSS) shows a compositional bias: low complexity. T129 bears the Phosphothreonine mark. The residue at position 130 (S130) is a Phosphoserine. Phosphothreonine occurs at positions 131 and 144. The Inhibitor sequence (IS) motif lies at 142–146 (RRTSV). S145 is modified (phosphoserine; by autocatalysis). The residue at position 147 (S147) is a Phosphoserine. T150 and T160 each carry phosphothreonine. 3',5'-cyclic AMP contacts are provided by residues 184–301 (LFNK…KSMP), E249, R258, 302–416 (VLKS…PTRH), E368, and R377.

It belongs to the cAMP-dependent kinase regulatory chain family. In terms of assembly, the inactive holoenzyme of cAMP-dependent protein kinase is a tetramer, composed of 2 regulatory subunits (R, encoded by BCY1) and two catalytic subunits (C, encoded by the 3 partially redundant TPK1, TPK2, and TPK3 genes). Activation by cAMP causes dissociation of the holoenzyme, producing 2 active catalytic monomers C and a regulatory dimer R(2). In terms of processing, phosphorylated by YAK1 in response to glucose starvation. Phosphorylated by MCK1 at Thr-129 upon TOR complex 1 (TORC1) inhibition. Thr-129 phosphorylation activates BCY1 to inhibit PKA. TORC1 inhibits phosphorylation of RxxS/T sites but has no effect on Ser-145 phosphorylation. The phosphorylation sites can be clustered in several groups, all localized in the N-terminal part. The first cluster termed cluster I (CI) is located close to the N-terminus and includes Ser-3, Ser-4 and Ser-9. The second includes Ser-68, Ser-70, Ser-74, Ser-77, Ser-79, Ser-81, Ser-83, and Ser-84. This cluster of phosphorylation sites, termed cluster II (CII), is important for BCY1 cytoplasmic localization and function. The third cluster of phosphorylated residues consists of Thr-144, Ser-145, Ser-147, Thr-150, and Thr-160. This cluster falls within or near the so-called autoinhibitory domain where the catalytic subunit of PKA autophosphorylates the highly conserved Ser-145 to inhibit BCY1. A last cluster of phosphorylated residues included Thr-129, Ser-130, and Thr-131 and is termed cluster III (CIII). Sites in CIII (and to a lesser extent in CII) are hyperphosphorylated in response to rapamycin.

The protein resides in the cytoplasm. Its subcellular location is the nucleus. Regulatory subunit of the cyclic AMP-dependent protein kinase (PKA), an effector of the Ras/cAMP pathway. Inhibits PKA activity in the absence of cAMP. cAMP activates PKA and promotes growth and proliferation in response to good nutrient conditions. Together with ZDS1, provides a negative feedback control on the cell wall integrity-signaling pathway by acting as a negative regulator of MAP kinase SLT2/MPK1. The protein is cAMP-dependent protein kinase regulatory subunit (BCY1) of Saccharomyces cerevisiae (strain ATCC 204508 / S288c) (Baker's yeast).